The chain runs to 126 residues: Adenosine 5'-monophosphoramidase HINT1 (126 aa).

Residue A2 is modified to N-acetylalanine. The HIT domain maps to 18-126; the sequence is IFGKIIRKEI…GGRQMNWPPG (109 aa). N6-acetyllysine is present on residues K21 and K30. Residue 43 to 44 participates in AMP binding; sequence DI. Phosphoserine is present on residues S45 and S72. AMP is bound by residues N99, 105–107, and 112–114; these read GQS and HLH. Positions 110–114 match the Histidine triad motif motif; it reads HIHLH. Residue H112 is the Tele-AMP-histidine intermediate of the active site.

The protein belongs to the HINT family. As to quaternary structure, homodimer. Interacts with CDK7. Interacts with RUVBL1 and RUVBL2 and is associated with the LEF1/TCF1-CTNNB1 complex and with a KAT5 histone acetyltransferase complex. Identified in a complex with MITF and CTNNB1. Interacts with CDC34 and RBX1, and is part of a SCF (SKP2-CUL1-F-box protein) E3 ubiquitin-protein ligase complex. Interacts with SUMO1, SUMO2 and RGS17. Interacts with the Ten-1 ICD form of TENM1. Interacts with CALM1; interaction increases in the presence of calcium ions.

Its subcellular location is the cytoplasm. The protein localises to the nucleus. It carries out the reaction adenosine 5'-phosphoramidate + H2O = AMP + NH4(+). Its function is as follows. Exhibits adenosine 5'-monophosphoramidase activity, hydrolyzing purine nucleotide phosphoramidates with a single phosphate group such as adenosine 5'monophosphoramidate (AMP-NH2) to yield AMP and NH2. Hydrolyzes adenosine 5'monophosphomorpholidate (AMP-morpholidate) and guanosine 5'monophosphomorpholidate (GMP-morpholidate). Hydrolyzes lysyl-AMP (AMP-N-epsilon-(N-alpha-acetyl lysine methyl ester)) generated by lysine tRNA ligase, as well as Met-AMP, His-AMP and Asp-AMP, lysyl-GMP (GMP-N-epsilon-(N-alpha-acetyl lysine methyl ester)) and AMP-N-alanine methyl ester. Can also convert adenosine 5'-O-phosphorothioate and guanosine 5'-O-phosphorothioate to the corresponding nucleoside 5'-O-phosphates with concomitant release of hydrogen sulfide. In addition, functions as a scaffolding protein that modulates transcriptional activation by the LEF1/TCF1-CTNNB1 complex and by the complex formed with MITF and CTNNB1. Modulates p53/TP53 levels and p53/TP53-mediated apoptosis. Modulates proteasomal degradation of target proteins by the SCF (SKP2-CUL1-F-box protein) E3 ubiquitin-protein ligase complex. Also exhibits SUMO-specific isopeptidase activity, deconjugating SUMO1 from RANGAP1 and RGS17. In Rattus norvegicus (Rat), this protein is Adenosine 5'-monophosphoramidase HINT1 (Hint1).